Consider the following 839-residue polypeptide: ABC transporter A family member 7 (839 aa).

Helical transmembrane passes span 30–50, 238–258, 286–306, 321–341, 352–372, 378–398, and 419–439; these read GVQI…KLWI, IASL…LPLF, IMTF…ISLI, FALF…AFFL, SIFG…LSLF, VFYY…LCGL, and ILFW…YLDK. Positions 525 to 756 constitute an ABC transporter domain; it reads LIVQGLRKQF…FGDGYSVRID (232 aa). Residue 559–566 participates in ATP binding; sequence GPNGAGKT.

Belongs to the ABC transporter superfamily. ABCA family.

Its subcellular location is the membrane. The sequence is that of ABC transporter A family member 7 (abcA7) from Dictyostelium discoideum (Social amoeba).